We begin with the raw amino-acid sequence, 176 residues long: Shikimate kinase (176 aa).

12 to 17 (GSGKST) serves as a coordination point for ATP. Position 16 (serine 16) interacts with Mg(2+). Residues aspartate 34, arginine 58, and glycine 80 each contribute to the substrate site. Position 117 (arginine 117) interacts with ATP. Substrate is bound at residue arginine 136. Arginine 153 contributes to the ATP binding site.

The protein belongs to the shikimate kinase family. Monomer. It depends on Mg(2+) as a cofactor.

The protein localises to the cytoplasm. The catalysed reaction is shikimate + ATP = 3-phosphoshikimate + ADP + H(+). It functions in the pathway metabolic intermediate biosynthesis; chorismate biosynthesis; chorismate from D-erythrose 4-phosphate and phosphoenolpyruvate: step 5/7. In terms of biological role, catalyzes the specific phosphorylation of the 3-hydroxyl group of shikimic acid using ATP as a cosubstrate. This chain is Shikimate kinase, found in Mycobacterium bovis (strain ATCC BAA-935 / AF2122/97).